The following is a 309-amino-acid chain: MKEEEKTRLVIVQGPTASGKSALALELAERIGGEIVNADSMQVYRGMDIGTAKPSQEERRRVPHHLYDIVDPKVNFTAADFREHASRAIADIERRGKRVILVGGTGLYIRILTQGLVASPGGDDNIRRELEDQAHGEGLESLHRRLAAVDPVAAARLHPNDGVRIVRALEVFLLTGRPLSAFQEAHRFADEPYRCLKLGITVERELLYRRVEERVDRMIAEGLVEEVRGLLSAGYPATLKAMGSIGYREICAHLAGEFSLDEAMRLIKQNTRQYAKRQMTWFRRDSEIIWVEYPGKFDSILSTVMGFYH.

An ATP-binding site is contributed by Gly-14 to Ser-21. Thr-16–Ser-21 lines the substrate pocket. The interval Asp-39 to Gln-42 is interaction with substrate tRNA.

Belongs to the IPP transferase family. Monomer. Requires Mg(2+) as cofactor.

The catalysed reaction is adenosine(37) in tRNA + dimethylallyl diphosphate = N(6)-dimethylallyladenosine(37) in tRNA + diphosphate. In terms of biological role, catalyzes the transfer of a dimethylallyl group onto the adenine at position 37 in tRNAs that read codons beginning with uridine, leading to the formation of N6-(dimethylallyl)adenosine (i(6)A). This Geobacter metallireducens (strain ATCC 53774 / DSM 7210 / GS-15) protein is tRNA dimethylallyltransferase.